The primary structure comprises 429 residues: Guanine nucleotide-binding protein subunit alpha (429 aa).

A lipid anchor (N-myristoyl glycine) is attached at glycine 2. Cysteine 3 carries the S-palmitoyl cysteine lipid modification. The G-alpha domain maps to 40–429; the sequence is KGVKLLLLGA…QQNLKKSGIM (390 aa). The tract at residues 43–56 is G1 motif; sequence KLLLLGAGESGKST. 6 residues coordinate GTP: glutamate 51, serine 52, glycine 53, lysine 54, serine 55, and threonine 56. Residue serine 55 participates in Mg(2+) binding. Positions 125–197 are not present in other G-proteins; the sequence is LKQIDADVAG…KDSEQFTRLS (73 aa). Residues 249–257 are G2 motif; sequence DILKGRIKT. Leucine 251, threonine 257, glycine 279, asparagine 345, lysine 346, aspartate 348, and alanine 401 together coordinate GTP. Threonine 257 is a binding site for Mg(2+). Positions 272 to 281 are G3 motif; sequence FKVLDAGGQR. The interval 341–348 is G4 motif; that stretch reads ILFLNKID. Residues 399–404 form a G5 motif region; sequence TCATDS.

The protein belongs to the G-alpha family. G(q) subfamily. As to quaternary structure, g proteins are composed of 3 units; alpha, beta and gamma. The alpha chain contains the guanine nucleotide binding site. Mg(2+) is required as a cofactor.

Guanine nucleotide-binding proteins (G proteins) are involved as modulators or transducers in various transmembrane signaling systems. Involved in the mating pathway. The polypeptide is Guanine nucleotide-binding protein subunit alpha (CAG1) (Candida albicans (strain WO-1) (Yeast)).